Reading from the N-terminus, the 611-residue chain is MSDSGYELSFSLNTLNHLSEGLYSNILRFYLKLVANAWDADATEVSINIRQDEIVIQDNGIGMSIEDANTKFLRIGHQKREDSANTISGRHVMGRKGIGILAIFGIANIAEVYSCKDGVPHGFIIHKGDIERGISSDVTLYRPSSVPQEALSIESGTKIILREIKSSIGNAEKTLRTDLARRFTIINNNCNFSVIINNTPINDNDRDYLNKVQFLWYLGGESSKYANFFTKLKKSFEITNLGDGMSGMTVKGWIGTVYRPSDIPNEQPYHIYFAHGKMIQEDILIDITDAGLYRQYIIGEIEADFMDSDDEDDIITSNRQRIKQTDPRYLKLLEYVKIDIMRVIASTWTKLRKEYPSNPKKEEVNDSSLSKDSNSSEKENTNASSDSSTATENASSDSSTATENASSETNDGEVEDNSFFDDDIPEPSPPPKQEITTAFREMKNLVKNSNIPNQMKNIILYDIQQAAYAYKGTSFKACIVMLGAILEGVMLGTIQRTDVLEYLIALPQVPKPLSDLGPRNPKFADRTVLAQYIGTTFSFQDCKEIIELCVQGTNKLGVDILQTVRNSIHPGSVLKDMKQLARFNHQSAVGYIAKLHEIINLVILWNPPSIP.

Positions 355-364 are enriched in basic and acidic residues; the sequence is YPSNPKKEEV. Positions 355–434 are disordered; sequence YPSNPKKEEV…PEPSPPPKQE (80 aa). Low complexity predominate over residues 381-409; sequence TNASSDSSTATENASSDSSTATENASSET. 2 consecutive repeat copies span residues 382–392 and 393–403. The segment at 382–403 is 2.5 X 11 AA tandem repeats; that stretch reads NASSDSSTATENASSDSSTATE. One copy of the 3; truncated repeat lies at 404–409; sequence NASSET. The segment covering 410-425 has biased composition (acidic residues); it reads NDGEVEDNSFFDDDIP.

It catalyses the reaction Endonucleolytic cleavage of DNA to give specific double-stranded fragments with terminal 5'-phosphates.. Its function is as follows. According to REBASE this is a P subtype restriction enzyme that recognizes the double-stranded sequence 5'-GTCGAC-3' and cleaves after G-1. No restriction activity was detected upon overexpressing this protein in E.coli. The chain is Putative type II restriction enzyme HgiDII from Herpetosiphon aurantiacus (Herpetosiphon giganteus).